Reading from the N-terminus, the 410-residue chain is Protein BTN2 (410 aa).

Disordered stretches follow at residues 223–264 and 276–410; these read INEP…TKED and MQEE…IEEI. Composition is skewed to basic and acidic residues over residues 233-264 and 276-311; these read SKID…TKED and MQEE…KESL. Residues 243 to 330 adopt a coiled-coil conformation; the sequence is NMSESLKEEE…QQKKLQNSKS (88 aa). Positions 334–362 are enriched in low complexity; that stretch reads SEIEASNKNNNSNSGSAESDNESINSDSD. Polar residues predominate over residues 364 to 373; that stretch reads TLDFSVSGNT.

In terms of assembly, interacts with RHB1, IST2, TDA3 and YIF1.

It localises to the cytoplasm. The protein resides in the late endosome. V-SNARE binding protein that facilitates specific protein retrieval from a late endosome to the Golgi. Modulates the rate of arginine uptake. Involved in pH homeostasis. Required for the correct localization of IST2. May be involved in ion homeostasis together with IST2. The chain is Protein BTN2 (BTN2) from Saccharomyces cerevisiae (strain ATCC 204508 / S288c) (Baker's yeast).